An 898-amino-acid polypeptide reads, in one-letter code: MNGVNEIRAAFLDFFRKNGHEIVPSSPLVPRNDPTLMFTNAGMVQFKNLFTGVEKRPYTRASTAQKCVRAGGKHNDLDNVGYTARHHTFFEMLGNFSFGDYFKPLAIELAWKLITEVFDLPKDRLLVTVYHDDDEAYDLWKKIAGFPDSKIIRIATSDNFWAMGDTGPCGPCSEIFYDQGEKLFGGPPGSADEDGDRFLEFWNLVFMQFEQRGPGDRIALPKPSIDTGMGLERIAALLQGVTSNYDIDLMRALILAVAQATGVDPDGPMRASHRVIADHLRASSFLIADGVLPSNEGRGYVLRRIMRRAMRHAQLLGAQEPLLWRLVPALTREMGQAYPELLRAEALIVETLRLEETRFRATLARGLTILEDETRHLSEGGVLSGEVAFKLYDTYGFPLDLTQDALRAKSLGVDMEGFEKAMARQRAEARKAWSGSGEAATDTHWFALREQLGATDFLGYDTEKAEALIQAILQDGKEVLRLEAGQSGAIVLNQTPFYGESGGQVGDTGLIIAPGMRFKVENTHKKLGDLFIHEGIVEEGAVVPGLEVRTLVDHSRRTAVRANHSATHLLHEALRQVLGDHIAQKGSLVAPDRLRFDFSHPKPVTPEEWTQIEDIANSVILENAPVTTKLMSIEDAMGSGARALFGEKYGDEVRVVSMGYDEDKADDSTDGRIAPPFSVELCGGTHVARTGDIGLLTIISESAVAAGVRRIEAKTGSSARHHLNTQASLLHSLAAQLKSPEDEASKRLSALIEERRKLDRELSEARKKLAMGGGSSNGADSPLREIGGIKFFRRAVTGVEMKDLKSLADEAKQTIGSGIVAIVGVGSDNKASVVVGVTDDLIDRFDAVALVRLAAGKLGGKGGGGRKDLAQAGGPDGEAAEAALTAIEESLGSSLPTP.

Zn(2+) is bound by residues His564, His568, Cys682, and His686.

Belongs to the class-II aminoacyl-tRNA synthetase family. The cofactor is Zn(2+).

It localises to the cytoplasm. It catalyses the reaction tRNA(Ala) + L-alanine + ATP = L-alanyl-tRNA(Ala) + AMP + diphosphate. Its function is as follows. Catalyzes the attachment of alanine to tRNA(Ala) in a two-step reaction: alanine is first activated by ATP to form Ala-AMP and then transferred to the acceptor end of tRNA(Ala). Also edits incorrectly charged Ser-tRNA(Ala) and Gly-tRNA(Ala) via its editing domain. The sequence is that of Alanine--tRNA ligase from Beijerinckia indica subsp. indica (strain ATCC 9039 / DSM 1715 / NCIMB 8712).